The sequence spans 425 residues: L-lysine N6-monooxygenase (425 aa).

8–14 (IGVGTGP) serves as a coordination point for FAD.

This sequence belongs to the lysine N(6)-hydroxylase/L-ornithine N(5)-oxygenase family. It depends on FAD as a cofactor.

Its subcellular location is the cytoplasm. It is found in the cell membrane. The catalysed reaction is L-lysine + NADPH + O2 = N(6)-hydroxy-L-lysine + NADP(+) + H2O. It functions in the pathway siderophore biosynthesis; aerobactin biosynthesis. Flavoprotein monooxygenase required for N-hydroxylation of lysine. Involved in the biosynthesis of the siderophore aerobactin which is a chelator that mediates the high-affinity iron transport systems induced by the organism under iron-stressed conditions. The protein is L-lysine N6-monooxygenase of Escherichia coli.